Consider the following 91-residue polypeptide: Small ribosomal subunit protein bS16 (91 aa).

This sequence belongs to the bacterial ribosomal protein bS16 family.

This is Small ribosomal subunit protein bS16 from Enterococcus faecalis (strain ATCC 700802 / V583).